A 242-amino-acid polypeptide reads, in one-letter code: Phosphoribosyl isomerase A (242 aa).

Catalysis depends on D12, which acts as the Proton acceptor. Catalysis depends on D131, which acts as the Proton donor.

This sequence belongs to the HisA/HisF family.

Its subcellular location is the cytoplasm. It carries out the reaction 1-(5-phospho-beta-D-ribosyl)-5-[(5-phospho-beta-D-ribosylamino)methylideneamino]imidazole-4-carboxamide = 5-[(5-phospho-1-deoxy-D-ribulos-1-ylimino)methylamino]-1-(5-phospho-beta-D-ribosyl)imidazole-4-carboxamide. The catalysed reaction is N-(5-phospho-beta-D-ribosyl)anthranilate = 1-(2-carboxyphenylamino)-1-deoxy-D-ribulose 5-phosphate. It functions in the pathway amino-acid biosynthesis; L-histidine biosynthesis; L-histidine from 5-phospho-alpha-D-ribose 1-diphosphate: step 4/9. It participates in amino-acid biosynthesis; L-tryptophan biosynthesis; L-tryptophan from chorismate: step 3/5. In terms of biological role, involved in both the histidine and tryptophan biosynthetic pathways. The protein is Phosphoribosyl isomerase A of Streptomyces avermitilis (strain ATCC 31267 / DSM 46492 / JCM 5070 / NBRC 14893 / NCIMB 12804 / NRRL 8165 / MA-4680).